Reading from the N-terminus, the 580-residue chain is MESQCDYSMYFPAVPLPPRAELAGDPGRYRALPRRNHLYLGETVRFLLVLRCRGGAGSGTGGGPGLGSRGAWAELATALAALASVSAGGGMPGGGGAGDQDSEPPGGGDPGGGGLFRGCSPLLTHGPGPATSGGATTLPVEEPIVSTDEVIFPLTVSLDRLPPGTPKAKIVVTVWKREIEAPEVRDQGYLRLLQTRSPGETFRGEQSAFKAQVSTLLTLLPPPVLRCRQFTVAGKHLTVLKVLNSSSQEEISIWDIRILPNFNASYLPVMPDGSVLLVDNVCHQSGEVSMGSFCRLPGTSGCFPCPLNALEEHNFLFQLRGGEQPPPGAKEGLEVPLIAVVQWSTPKLPFTQSIYTHYRLPSVRLDRPCFVMTASCKSPVRTYERFTVTYTLLNNLQDFLAVRLVWTPEHAQAGKQLCEEERRAMQAALDSVVCHTPLNNLGFSRKGSALTFSVAFQALRTGLFELSQHMKLKLQFTASVSHPPPEARPLSRKSSPSSPAVRDLVERHQASLGRSQSFSHQQPSRSHLMRSGSVMERRAITPPVASPVGRPLYLPPDKAVLSLDKIAKRECKVLVVEPVK.

2 disordered regions span residues 90–138 (GMPG…ATTL) and 480–533 (VSHP…RSGS). The span at 105 to 116 (PGGGDPGGGGLF) shows a compositional bias: gly residues. Positions 124 to 137 (THGPGPATSGGATT) are enriched in low complexity. S491 carries the phosphoserine modification. A compositionally biased stretch (low complexity) spans 492–502 (RKSSPSSPAVR). Positions 512-525 (LGRSQSFSHQQPSR) are enriched in polar residues. The residue at position 517 (S517) is a Phosphoserine. A Phosphothreonine modification is found at T541. A Phosphoserine modification is found at S546.

In terms of assembly, component of the multisubunit TRAPP II complex, which includes at least TRAPPC1, TRAPPC2, TRAPPC2L, TRAPPC3, TRAPPC4, TRAPPC5, TRAPPC6A/B, TRAPPC9, TRAPPC10 and TRAPPC14. TRAPPC9, TRAPPC10 and TRAPPC14 are specific subunits of the TRAPP II complex. Interacts with alpha-tubulin during mitosis. Interacts with RAB3IP (via the N-terminal region); this interaction mediates RAB3IP association with the TRAPP II complex. Interacts with TRAPPC10. Interacts with FBF1. As to expression, broadly expressed. High levels in brain, cerebellum, testis and whole blood.

It is found in the cytoplasm. It localises to the cytoskeleton. The protein localises to the spindle. Its subcellular location is the vesicle. The protein resides in the midbody. Its function is as follows. Specific subunit of the TRAPP (transport protein particle) II complex, a highly conserved vesicle tethering complex that functions in late Golgi trafficking as a membrane tether. TRAPP II complex also has GEF activity toward RAB1A. TRAPPC14 is dispensable for TRAPPII complex integrity but mediates RAB3IP preciliary vesicle trafficking to the mother centriole during ciliogenesis. Modulates YAP1 activity as transcriptional regulator. The polypeptide is Trafficking protein particle complex subunit 14 (Homo sapiens (Human)).